The primary structure comprises 110 residues: UPF0251 protein PYRAB12660 (110 aa).

The protein belongs to the UPF0251 family.

This is UPF0251 protein PYRAB12660 from Pyrococcus abyssi (strain GE5 / Orsay).